Consider the following 276-residue polypeptide: Large ribosomal subunit protein uL2 (276 aa).

Disordered stretches follow at residues 1 to 20 (MGIKKYNPTTNGRRNMTTND) and 219 to 276 (TVRG…RRKK). Polar residues predominate over residues 7–20 (NPTTNGRRNMTTND).

Belongs to the universal ribosomal protein uL2 family. In terms of assembly, part of the 50S ribosomal subunit. Forms a bridge to the 30S subunit in the 70S ribosome.

Its function is as follows. One of the primary rRNA binding proteins. Required for association of the 30S and 50S subunits to form the 70S ribosome, for tRNA binding and peptide bond formation. It has been suggested to have peptidyltransferase activity; this is somewhat controversial. Makes several contacts with the 16S rRNA in the 70S ribosome. The sequence is that of Large ribosomal subunit protein uL2 from Bacillus anthracis (strain A0248).